Here is a 209-residue protein sequence, read N- to C-terminus: Kynurenine formamidase (209 aa).

Residue W18 coordinates substrate. 3 residues coordinate Zn(2+): H48, H52, and D54. Catalysis depends on H58, which acts as the Proton donor/acceptor. Positions 160 and 172 each coordinate Zn(2+).

It belongs to the Cyclase 1 superfamily. KynB family. As to quaternary structure, homodimer. Zn(2+) serves as cofactor.

It catalyses the reaction N-formyl-L-kynurenine + H2O = L-kynurenine + formate + H(+). It participates in amino-acid degradation; L-tryptophan degradation via kynurenine pathway; L-kynurenine from L-tryptophan: step 2/2. Catalyzes the hydrolysis of N-formyl-L-kynurenine to L-kynurenine, the second step in the kynurenine pathway of tryptophan degradation. The polypeptide is Kynurenine formamidase (Maricaulis maris (strain MCS10) (Caulobacter maris)).